Here is a 1271-residue protein sequence, read N- to C-terminus: Period circadian protein (1271 aa).

Residues 1 to 14 (MEGESTESTQNTKV) are compositionally biased toward polar residues. The interval 1–102 (MEGESTESTQ…AEEQPHSSGT (102 aa)) is disordered. A compositionally biased stretch (low complexity) spans 15–46 (SDSAYSNSCSNSQSQRSGSSKSMLSGSHSSGS). The short motif at 65–78 (KRNKEKSRKKKKAK) is the Nuclear localization signal element. Residues 65-78 (KRNKEKSRKKKKAK) are compositionally biased toward basic residues. Over residues 80 to 90 (TQAQATISSSL) the composition is skewed to polar residues. 2 PAS domains span residues 189–259 (TGPA…IPIA) and 339–409 (YRVP…MKKG). Positions 596-660 (APVEVDPPKV…TNTSNAGTGT (65 aa)) are disordered. 3 consecutive repeat copies span residues 657-658 (GT), 659-660 (GT), and 661-662 (GT). Residues 657–677 (GTGTGTVTGTGTIIATSGTGT) are 8 X 2 AA approximate tandem repeats of G-T. One copy of the 4; approximate repeat lies at 663–664 (VT). Repeat copies occupy residues 665 to 666 (GT), 667 to 668 (GT), 674 to 675 (GT), and 676 to 677 (GT). Composition is skewed to polar residues over residues 746 to 772 (GAEN…NSAA) and 781 to 803 (GPDN…SGAE). 5 disordered regions span residues 746-913 (GAEN…VEKN), 928-956 (EYSS…PKQQ), 1014-1050 (PAPG…QQAA), 1143-1191 (TPAQ…NSNQ), and 1227-1271 (KTTD…HGDG). Basic and acidic residues-rich tracts occupy residues 805–822 (SRAE…HPRP) and 831–841 (RPDKTGPDKSG). The span at 864-884 (QDTRTTAGTPDSPPVSLTESL) shows a compositional bias: polar residues. 2 stretches are compositionally biased toward basic and acidic residues: residues 885 to 896 (LNKHNDEMEKFM) and 903 to 913 (SRGDRRTVEKN). Residues 1014-1023 (PAPGALSPTP) show a composition bias toward low complexity. Residues 1025–1036 (NQKHHHHAHQHA) are compositionally biased toward basic residues. Positions 1143–1167 (TPAQLQRPSSQDTSVKTEPASNATP) are enriched in polar residues. Residues 1257-1271 (IMEHPEEDQTQHGDG) show a composition bias toward basic and acidic residues.

As to quaternary structure, forms a heterodimer with timeless (TIM); the complex then translocates into the nucleus. Phosphorylated with a circadian rhythmicity, probably by the double-time protein (dbt). Phosphorylation could be implicated in the stability of per monomer and in the formation of heterodimer per-tim.

The protein resides in the nucleus. Its subcellular location is the cytoplasm. It localises to the perinuclear region. In terms of biological role, essential for biological clock functions. Determines the period length of circadian and ultradian rhythms; an increase in PER dosage leads to shortened circadian rhythms and a decrease leads to lengthened circadian rhythms. Essential for the circadian rhythmicity of locomotor activity, eclosion behavior, and for the rhythmic component of the male courtship song that originates in the thoracic nervous system. The biological cycle depends on the rhythmic formation and nuclear localization of the TIM-PER complex. Light induces the degradation of TIM, which promotes elimination of PER. Nuclear activity of the heterodimer coordinatively regulates PER and TIM transcription through a negative feedback loop. Behaves as a negative element in circadian transcriptional loop. Does not appear to bind DNA, suggesting indirect transcriptional inhibition. In Drosophila pseudoobscura pseudoobscura (Fruit fly), this protein is Period circadian protein (per).